The primary structure comprises 153 residues: Transmembrane inner ear expressed protein (153 aa).

The N-terminal stretch at 1–28 (MAGRQHGSGRLWALGGAALGACLAGVAT) is a signal peptide. Residues 29–58 (QLVEPSTAPPKPKPPPLTKETVVFWDMRLW) are Extracellular-facing. Residues 59 to 79 (HVVGIFSLFVLSIIITLCCVF) form a helical membrane-spanning segment. Topologically, residues 80–153 (NCRVPRTRKE…KNEAKKKGEK (74 aa)) are cytoplasmic.

In terms of assembly, forms the MET channel composed of TMC (TMC1 or TMC2), TMIE, TOMT, CIB (CIB2 or CIB3), LHPL5 and PCDH15. As to expression, expressed in brain, kidney, liver, lung and cochlea.

The protein localises to the membrane. In terms of biological role, auxiliary subunit of the mechanotransducer (MET) non-specific cation channel complex located at the tips of stereocilia of cochlear hair cells and that mediates sensory transduction in the auditory system. The MET complex is composed of two dimeric pore-forming ion-conducting transmembrane TMC (TMC1 or TMC2) subunits, and aided by several auxiliary proteins including LHFPL5, TMIE, CIB2/3 and TOMT, and the tip-link PCDH15. May contribute to the formation of the pore. The polypeptide is Transmembrane inner ear expressed protein (Tmie) (Mus musculus (Mouse)).